The sequence spans 1402 residues: Baculoviral IAP repeat-containing protein 1g (1402 aa).

BIR repeat units lie at residues 60 to 127 (EAKR…CEFL), 159 to 227 (EEAR…CEFL), and 278 to 345 (EELR…CVFL). The Zn(2+) site is built by C315, C318, H335, and C342. Residues 464-759 (SVMCVEGEAG…EFLAAVRLTE (296 aa)) enclose the NACHT domain. Position 476 (K476) interacts with ATP.

Its function is as follows. Prevents motor-neuron apoptosis induced by a variety of signals. In Mus musculus (Mouse), this protein is Baculoviral IAP repeat-containing protein 1g (Naip7).